Reading from the N-terminus, the 224-residue chain is MGSNAVPSLWYWVVDERTTSGRGTWWAHTELNWGTDKQKEFVENQLGFNETSATDSHNFKKALLHQPAYLISGLDVVADHLVFAAFRAGAVGYDMTTDTNASTYNQALTWSTTAGLDSAGGYKALVENTAGLNGPINGLFTLLDTFAYVTPVSGMKGGSKNTEAVQTTYPVKSDQKASAKIASLINASPLNSYGDKKSHPPKVKGRQLQNIFDDWKLTKAVSLM.

Belongs to the MgpC family.

This is Putative MgpC-like protein MPN_150 from Mycoplasma pneumoniae (strain ATCC 29342 / M129 / Subtype 1) (Mycoplasmoides pneumoniae).